The primary structure comprises 300 residues: Ribosomal protein bS6--L-glutamate ligase (300 aa).

In terms of domain architecture, ATP-grasp spans 104–287; the sequence is MQLLARQGID…IAGKMIRWIE (184 aa). ATP-binding positions include lysine 141, 178–179, aspartate 187, and 211–213; these read EY and RSN. Residues aspartate 248, glutamate 260, and asparagine 262 each coordinate Mg(2+). Mn(2+) is bound by residues aspartate 248, glutamate 260, and asparagine 262.

The protein belongs to the RimK family. The cofactor is Mg(2+). Mn(2+) is required as a cofactor.

In terms of biological role, an L-glutamate ligase that catalyzes the ATP-dependent post-translational addition of glutamate residues to the C-terminus of ribosomal protein bS6 (RpsF). Is also able to catalyze the synthesis of poly-alpha-glutamate in vitro, via ATP hydrolysis from unprotected glutamate as substrate. The number of glutamate residues added to either RpsF or to poly-alpha-glutamate changes with pH. The protein is Ribosomal protein bS6--L-glutamate ligase of Shigella dysenteriae serotype 1 (strain Sd197).